Here is a 230-residue protein sequence, read N- to C-terminus: Cytidylate kinase (230 aa).

12–20 (GPSGAGKGT) is an ATP binding site.

This sequence belongs to the cytidylate kinase family. Type 1 subfamily.

The protein resides in the cytoplasm. It carries out the reaction CMP + ATP = CDP + ADP. The catalysed reaction is dCMP + ATP = dCDP + ADP. The polypeptide is Cytidylate kinase (Yersinia pseudotuberculosis serotype O:1b (strain IP 31758)).